The sequence spans 231 residues: Coproheme decarboxylase (231 aa).

Lysine 44 is covalently cross-linked (Isoglutamyl lysine isopeptide (Lys-Gln) (interchain with Q-Cter in protein Pup)). The active site involves tyrosine 133. Histidine 156 contributes to the Fe-coproporphyrin III binding site.

This sequence belongs to the ChdC family. Type 2 subfamily. Fe-coproporphyrin III serves as cofactor.

It carries out the reaction Fe-coproporphyrin III + 2 H2O2 + 2 H(+) = heme b + 2 CO2 + 4 H2O. The enzyme catalyses Fe-coproporphyrin III + H2O2 + H(+) = harderoheme III + CO2 + 2 H2O. The catalysed reaction is harderoheme III + H2O2 + H(+) = heme b + CO2 + 2 H2O. The protein operates within porphyrin-containing compound metabolism; protoheme biosynthesis. Functionally, involved in coproporphyrin-dependent heme b biosynthesis. Catalyzes the decarboxylation of Fe-coproporphyrin III (coproheme) to heme b (protoheme IX), the last step of the pathway. The reaction occurs in a stepwise manner with a three-propionate intermediate. The chain is Coproheme decarboxylase from Mycolicibacterium smegmatis (strain ATCC 700084 / mc(2)155) (Mycobacterium smegmatis).